Consider the following 682-residue polypeptide: DNA ligase (682 aa).

NAD(+) contacts are provided by residues 38–42, 87–88, and Glu119; these read DAEYD and SI. Residue Lys121 is the N6-AMP-lysine intermediate of the active site. NAD(+)-binding residues include Arg142, Glu181, Lys298, and Lys322. Zn(2+) is bound by residues Cys416, Cys419, Cys434, and Cys439. The region spanning 601–682 is the BRCT domain; the sequence is GHEMPLAGKT…LLSLLEPGER (82 aa).

Belongs to the NAD-dependent DNA ligase family. LigA subfamily. Mg(2+) is required as a cofactor. Requires Mn(2+) as cofactor.

It carries out the reaction NAD(+) + (deoxyribonucleotide)n-3'-hydroxyl + 5'-phospho-(deoxyribonucleotide)m = (deoxyribonucleotide)n+m + AMP + beta-nicotinamide D-nucleotide.. In terms of biological role, DNA ligase that catalyzes the formation of phosphodiester linkages between 5'-phosphoryl and 3'-hydroxyl groups in double-stranded DNA using NAD as a coenzyme and as the energy source for the reaction. It is essential for DNA replication and repair of damaged DNA. The sequence is that of DNA ligase from Desulfosudis oleivorans (strain DSM 6200 / JCM 39069 / Hxd3) (Desulfococcus oleovorans).